We begin with the raw amino-acid sequence, 82 residues long: P2Y purinoceptor 2 (82 aa).

Residues 1 to 25 (LPLSYGVVCVLGLCLNVVALYIFLC) traverse the membrane as a helical segment. The Cytoplasmic portion of the chain corresponds to 26 to 35 (RLKTWNASTT). A helical membrane pass occupies residues 36 to 56 (YMFHLAVSDSLYAASLPLLVY). At 57 to 75 (YYAQGDHWPFSTVLCKLVR) the chain is on the extracellular side. Residues 76-82 (FLFYTNL) form a helical membrane-spanning segment.

This sequence belongs to the G-protein coupled receptor 1 family. Expressed in brain, heart, stria vascularis and vestibular labyrinth.

It is found in the cell membrane. In terms of biological role, receptor for ATP and UTP coupled to G-proteins that activate a phosphatidylinositol-calcium second messenger system. Not activated by UDP. This chain is P2Y purinoceptor 2 (P2RY2), found in Meriones unguiculatus (Mongolian jird).